The following is a 218-amino-acid chain: Cytidylate kinase (218 aa).

An ATP-binding site is contributed by glycine 21–threonine 29.

Belongs to the cytidylate kinase family. Type 1 subfamily.

The protein resides in the cytoplasm. The enzyme catalyses CMP + ATP = CDP + ADP. It carries out the reaction dCMP + ATP = dCDP + ADP. This chain is Cytidylate kinase, found in Rickettsia canadensis (strain McKiel).